We begin with the raw amino-acid sequence, 327 residues long: tRNA uridine(34) hydroxylase (327 aa).

Positions 123-217 constitute a Rhodanese domain; the sequence is SDPEVLLVDT…YLEEVKLEES (95 aa). Catalysis depends on Cys177, which acts as the Cysteine persulfide intermediate.

It belongs to the TrhO family.

The enzyme catalyses uridine(34) in tRNA + AH2 + O2 = 5-hydroxyuridine(34) in tRNA + A + H2O. Functionally, catalyzes oxygen-dependent 5-hydroxyuridine (ho5U) modification at position 34 in tRNAs. The protein is tRNA uridine(34) hydroxylase of Shewanella pealeana (strain ATCC 700345 / ANG-SQ1).